Here is a 399-residue protein sequence, read N- to C-terminus: Aspartate aminotransferase (399 aa).

L-aspartate is bound by residues glycine 42 and asparagine 179. Lysine 240 carries the post-translational modification N6-(pyridoxal phosphate)lysine. Arginine 372 contacts L-aspartate.

It belongs to the class-I pyridoxal-phosphate-dependent aminotransferase family. As to quaternary structure, homodimer. It depends on pyridoxal 5'-phosphate as a cofactor.

The protein localises to the cytoplasm. The catalysed reaction is L-aspartate + 2-oxoglutarate = oxaloacetate + L-glutamate. The protein is Aspartate aminotransferase (aspC) of Sulfurisphaera tokodaii (strain DSM 16993 / JCM 10545 / NBRC 100140 / 7) (Sulfolobus tokodaii).